The sequence spans 144 residues: Large ribosomal subunit protein uL11 (144 aa).

Belongs to the universal ribosomal protein uL11 family. Part of the ribosomal stalk of the 50S ribosomal subunit. Interacts with L10 and the large rRNA to form the base of the stalk. L10 forms an elongated spine to which L12 dimers bind in a sequential fashion forming a multimeric L10(L12)X complex. Post-translationally, one or more lysine residues are methylated.

In terms of biological role, forms part of the ribosomal stalk which helps the ribosome interact with GTP-bound translation factors. This Deinococcus deserti (strain DSM 17065 / CIP 109153 / LMG 22923 / VCD115) protein is Large ribosomal subunit protein uL11.